We begin with the raw amino-acid sequence, 290 residues long: Ribosomal RNA small subunit methyltransferase A (290 aa).

Positions 27, 29, 54, 75, 100, and 125 each coordinate S-adenosyl-L-methionine.

This sequence belongs to the class I-like SAM-binding methyltransferase superfamily. rRNA adenine N(6)-methyltransferase family. RsmA subfamily.

Its subcellular location is the cytoplasm. The enzyme catalyses adenosine(1518)/adenosine(1519) in 16S rRNA + 4 S-adenosyl-L-methionine = N(6)-dimethyladenosine(1518)/N(6)-dimethyladenosine(1519) in 16S rRNA + 4 S-adenosyl-L-homocysteine + 4 H(+). In terms of biological role, specifically dimethylates two adjacent adenosines (A1518 and A1519) in the loop of a conserved hairpin near the 3'-end of 16S rRNA in the 30S particle. May play a critical role in biogenesis of 30S subunits. The chain is Ribosomal RNA small subunit methyltransferase A from Streptococcus pneumoniae (strain Hungary19A-6).